Consider the following 159-residue polypeptide: Ecotin (159 aa).

The N-terminal stretch at 1-22 (MRPTPLSTILALTMAATAPAMA) is a signal peptide. C68 and C105 form a disulfide bridge.

The protein belongs to the protease inhibitor I11 (ecotin) family. In terms of assembly, homodimer.

Its subcellular location is the periplasm. Functionally, general inhibitor of family S1 serine proteases. The sequence is that of Ecotin from Pseudomonas putida (strain W619).